The sequence spans 1708 residues: 187-kDa microtubule-associated protein AIR9 (1708 aa).

Positions 67 to 93 are enriched in polar residues; that stretch reads SSLRVSGTTPVTIRRNSTGGVTENLAG. A disordered region spans residues 67–255; sequence SSLRVSGTTP…KTSTPESRDS (189 aa). Residues 110 to 121 are compositionally biased toward basic and acidic residues; sequence DPVRRSLPELRK. The segment covering 122-134 has biased composition (low complexity); sequence SSVSSLSAKTVSK. The segment covering 149–165 has biased composition (polar residues); it reads GSRSLTKSTGFSLSKPE. Over residues 173–234 the composition is skewed to low complexity; that stretch reads SVSVSSKRAP…SIRSKSFSSP (62 aa). LRR repeat units follow at residues 267 to 290, 291 to 315, 316 to 335, 337 to 359, 360 to 382, 384 to 402, and 403 to 425; these read AGDD…GLHL, SPNL…ILNR, VKVL…EPLE, CKML…LPQL, PNLE…SQPR, QVLA…FPYL, and PVLE…EAAS. A9 repeat units follow at residues 489–584, 601–682, 698–777, 793–878, 895–977, 994–1073, 1090–1167, 1183–1272, 1287–1365, 1382–1473, and 1489–1569; these read PSGY…FAIS, LNGE…QYKY, ITGD…VSTS, IVGD…VYVL, ITGD…RSCM, VVGA…AISE, FLGS…RSIR, IPDC…VVVI, VRVK…KMSE, FTGK…AYAE, and IEGQ…VSAS.

In terms of assembly, interacts with KCBP. Strongly expressed in dividing cells, like the meristemic region of the root tip.

The protein localises to the cytoplasm. Its subcellular location is the cell cortex. It is found in the cytoskeleton. It localises to the phragmoplast. Functionally, microtubule-associated protein that may be involved in the maturation of cell plates and proper insertion of cross-walls after cytokinesis. This is 187-kDa microtubule-associated protein AIR9 from Arabidopsis thaliana (Mouse-ear cress).